Reading from the N-terminus, the 287-residue chain is Protein UL24 homolog (287 aa).

2 disordered regions span residues 1-33 (MARRRKEVQRGESRSHRSRTRSKTAHHRKFSRR) and 254-287 (RVGKESATKPASYSTSTEESKNLSEPCFDPDSNL). Positions 16–33 (HRSRTRSKTAHHRKFSRR) are enriched in basic residues.

This sequence belongs to the herpesviridae UL24 family.

The protein localises to the virion. It localises to the host cytoplasm. The protein resides in the host nucleus. It is found in the host nucleolus. Its subcellular location is the host Golgi apparatus. Functionally, may participate in nuclear egress of viral particles. Plays a role in the dispersal of several host nucleolar proteins including NCL/nucleolin and NPM1. Since deletion of host NCL/nucleolin negatively impact on nuclear egress, UL24 supposedly acts on this process through its effect on host nucleoli. The polypeptide is Protein UL24 homolog (Infectious laryngotracheitis virus (strain Thorne V882) (ILTV)).